The sequence spans 561 residues: Asparagine synthetase [glutamine-hydrolyzing] (561 aa).

Cys-2 acts as the For GATase activity in catalysis. A Glutamine amidotransferase type-2 domain is found at 2 to 191 (CGIWALFGSD…PGHYEVLDLK (190 aa)). Residues 49–53 (RLAVV), 75–77 (NGE), and Asp-97 each bind L-glutamine. In terms of domain architecture, Asparagine synthetase spans 213–536 (HAACDTVGNL…PGRSSWLPHY (324 aa)). ATP is bound by residues Leu-256, Ile-288, and 363-364 (SG).

It catalyses the reaction L-aspartate + L-glutamine + ATP + H2O = L-asparagine + L-glutamate + AMP + diphosphate + H(+). It participates in amino-acid biosynthesis; L-asparagine biosynthesis; L-asparagine from L-aspartate (L-Gln route): step 1/1. This chain is Asparagine synthetase [glutamine-hydrolyzing] (ASNS), found in Gallus gallus (Chicken).